The primary structure comprises 392 residues: Arogenate dehydratase/prephenate dehydratase 1, chloroplastic (392 aa).

Residues methionine 1–alanine 48 constitute a chloroplast transit peptide. The region spanning arginine 107 to arginine 282 is the Prephenate dehydratase domain. The 92-residue stretch at serine 296 to proline 387 folds into the ACT domain.

As to expression, expressed in roots, leaves, stems, flowers and siliques.

The protein resides in the plastid. Its subcellular location is the chloroplast stroma. The catalysed reaction is L-arogenate + H(+) = L-phenylalanine + CO2 + H2O. It carries out the reaction prephenate + H(+) = 3-phenylpyruvate + CO2 + H2O. Its pathway is amino-acid biosynthesis; L-phenylalanine biosynthesis; L-phenylalanine from L-arogenate: step 1/1. The protein operates within amino-acid biosynthesis; L-phenylalanine biosynthesis; phenylpyruvate from prephenate: step 1/1. In terms of biological role, converts the prephenate produced from the shikimate-chorismate pathway into phenylalanine. Dehydratase that uses arogenate and prephenate as substrates. Utilzes more efficiently arogenate than prephenate. This chain is Arogenate dehydratase/prephenate dehydratase 1, chloroplastic, found in Arabidopsis thaliana (Mouse-ear cress).